The following is a 376-amino-acid chain: 23S rRNA (uracil(747)-C(5))-methyltransferase RlmC (376 aa).

Cys3, Cys11, Cys14, and Cys88 together coordinate [4Fe-4S] cluster. Positions 213, 242, 263, and 308 each coordinate S-adenosyl-L-methionine. The Nucleophile role is filled by Cys335.

The protein belongs to the class I-like SAM-binding methyltransferase superfamily. RNA M5U methyltransferase family. RlmC subfamily.

It carries out the reaction uridine(747) in 23S rRNA + S-adenosyl-L-methionine = 5-methyluridine(747) in 23S rRNA + S-adenosyl-L-homocysteine + H(+). Catalyzes the formation of 5-methyl-uridine at position 747 (m5U747) in 23S rRNA. In Vibrio vulnificus (strain CMCP6), this protein is 23S rRNA (uracil(747)-C(5))-methyltransferase RlmC.